The sequence spans 122 residues: ATP synthase epsilon chain (122 aa).

Positions 97–112 are enriched in basic and acidic residues; sequence EDLKSERELTRSRGDA. Residues 97-122 form a disordered region; the sequence is EDLKSERELTRSRGDAALRATRRLNS.

This sequence belongs to the ATPase epsilon chain family. As to quaternary structure, F-type ATPases have 2 components, CF(1) - the catalytic core - and CF(0) - the membrane proton channel. CF(1) has five subunits: alpha(3), beta(3), gamma(1), delta(1), epsilon(1). CF(0) has three main subunits: a, b and c.

The protein resides in the cell membrane. Produces ATP from ADP in the presence of a proton gradient across the membrane. The chain is ATP synthase epsilon chain from Corynebacterium aurimucosum (strain ATCC 700975 / DSM 44827 / CIP 107346 / CN-1) (Corynebacterium nigricans).